A 209-amino-acid chain; its full sequence is Pyridoxal phosphate homeostasis protein (209 aa).

K31 bears the N6-(pyridoxal phosphate)lysine mark.

This sequence belongs to the pyridoxal phosphate-binding protein YggS/PROSC family.

Pyridoxal 5'-phosphate (PLP)-binding protein, which is involved in PLP homeostasis. The chain is Pyridoxal phosphate homeostasis protein from Deinococcus radiodurans (strain ATCC 13939 / DSM 20539 / JCM 16871 / CCUG 27074 / LMG 4051 / NBRC 15346 / NCIMB 9279 / VKM B-1422 / R1).